Here is a 677-residue protein sequence, read N- to C-terminus: Fermitin family homolog 1 (677 aa).

An FERM domain is found at 96–653 (MLRLRLPNLK…HEYIGGYIFL (558 aa)). Phosphoserine is present on residues S170, S179, and S361. Residues 377–473 (KLFRPKKLLP…WMAACMLASK (97 aa)) form the PH domain.

It belongs to the kindlin family. As to quaternary structure, interacts with the cytoplasmic domain of integrins ITGB1 and ITGB3. Expressed in brain, skeletal muscle, kidney, colon, adrenal gland, prostate, and placenta. Weakly or not expressed in heart, thymus, spleen, liver, small intestine, bone marrow, lung and peripheral blood leukocytes. Overexpressed in some colon and lung tumors. In skin, it is localized within the epidermis and particularly in basal keratocytes. Not detected in epidermal melanocytes and dermal fibroblasts.

The protein resides in the cytoplasm. It is found in the cytoskeleton. It localises to the cell junction. The protein localises to the focal adhesion. Its subcellular location is the cell projection. The protein resides in the ruffle membrane. Involved in cell adhesion. Contributes to integrin activation. When coexpressed with talin, potentiates activation of ITGA2B. Required for normal keratinocyte proliferation. Required for normal polarization of basal keratinocytes in skin, and for normal cell shape. Required for normal adhesion of keratinocytes to fibronectin and laminin, and for normal keratinocyte migration to wound sites. May mediate TGF-beta 1 signaling in tumor progression. The polypeptide is Fermitin family homolog 1 (FERMT1) (Homo sapiens (Human)).